The chain runs to 310 residues: HPr kinase/phosphorylase (310 aa).

Catalysis depends on residues His138 and Lys159. 153–160 (GKSGVGKS) is an ATP binding site. Residue Ser160 participates in Mg(2+) binding. The Proton acceptor; for phosphorylation activity. Proton donor; for dephosphorylation activity role is filled by Asp177. Positions 201 to 210 (LEIRGLGIIN) are important for the catalytic mechanism of both phosphorylation and dephosphorylation. Glu202 lines the Mg(2+) pocket. The active site involves Arg243. Residues 264-269 (PVRPGR) are important for the catalytic mechanism of dephosphorylation.

Belongs to the HPrK/P family. Homohexamer. The cofactor is Mg(2+).

It carries out the reaction [HPr protein]-L-serine + ATP = [HPr protein]-O-phospho-L-serine + ADP + H(+). The enzyme catalyses [HPr protein]-O-phospho-L-serine + phosphate + H(+) = [HPr protein]-L-serine + diphosphate. Catalyzes the ATP- as well as the pyrophosphate-dependent phosphorylation of a specific serine residue in HPr, a phosphocarrier protein of the phosphoenolpyruvate-dependent sugar phosphotransferase system (PTS). HprK/P also catalyzes the pyrophosphate-producing, inorganic phosphate-dependent dephosphorylation (phosphorolysis) of seryl-phosphorylated HPr (P-Ser-HPr). The two antagonistic activities of HprK/P are regulated by several intracellular metabolites, which change their concentration in response to the absence or presence of rapidly metabolisable carbon sources (glucose, fructose, etc.) in the growth medium. Also phosphorylates/dephosphorylates the HPr-like catabolite repression protein crh on a specific serine residue. Therefore, by controlling the phosphorylation state of HPr and crh, HPrK/P is a sensor enzyme that plays a major role in the regulation of carbon metabolism and sugar transport: it mediates carbon catabolite repression (CCR), and regulates PTS-catalyzed carbohydrate uptake and inducer exclusion. This chain is HPr kinase/phosphorylase, found in Bacillus licheniformis (strain ATCC 14580 / DSM 13 / JCM 2505 / CCUG 7422 / NBRC 12200 / NCIMB 9375 / NCTC 10341 / NRRL NRS-1264 / Gibson 46).